The sequence spans 942 residues: Lambda-carrageenase (942 aa).

Positions 1–25 (MKIKILSAMVASSLLIGCVIPTVKA) are cleaved as a signal peptide.

In terms of assembly, monomer.

It is found in the secreted. The enzyme catalyses Endohydrolysis of (1-&gt;4)-beta-linkages in the backbone of lambda-carrageenan, resulting in the tetrasaccharide alpha-D-Galp2,6S2-(1-&gt;3)-beta-D-Galp2S-(1-&gt;4)-alpha-D-Galp2,6S2-(1-&gt;3)-D-Galp2S.. Hydrolyzes lambda-carrageenan with inversion of anomeric configuration. Does not hydrolyze iota- and kappa-carrageenans, agarose or porphyran. In Pseudoalteromonas carrageenovora (Alteromonas carrageenovora), this protein is Lambda-carrageenase.